The chain runs to 61 residues: Transcription elongation factor Spt4 (61 aa).

Residues Cys-6, Cys-9, Cys-18, and Cys-21 each contribute to the Zn(2+) site.

It belongs to the archaeal Spt4 family. In terms of assembly, heterodimer composed of Spt4 and Spt5.

Stimulates transcription elongation. The protein is Transcription elongation factor Spt4 of Pyrococcus furiosus (strain ATCC 43587 / DSM 3638 / JCM 8422 / Vc1).